We begin with the raw amino-acid sequence, 478 residues long: Tubulin gamma chain (478 aa).

141–147 (AGGTGSG) provides a ligand contact to GTP. The segment at 451 to 478 (ISQKESSSLANENGNGANNKPGKSAMAL) is disordered. Polar residues predominate over residues 459-468 (LANENGNGAN).

It belongs to the tubulin family.

The protein localises to the cytoplasm. It localises to the cytoskeleton. It is found in the microtubule organizing center. The protein resides in the centrosome. In terms of biological role, tubulin is the major constituent of microtubules. The gamma chain is found at microtubule organizing centers (MTOC) such as the spindle poles or the centrosome, suggesting that it is involved in the minus-end nucleation of microtubule assembly. The protein is Tubulin gamma chain of Reticulomyxa filosa.